The primary structure comprises 122 residues: Large ribosomal subunit protein uL14 (122 aa).

This sequence belongs to the universal ribosomal protein uL14 family. Part of the 50S ribosomal subunit. Forms a cluster with proteins L3 and L19. In the 70S ribosome, L14 and L19 interact and together make contacts with the 16S rRNA in bridges B5 and B8.

Functionally, binds to 23S rRNA. Forms part of two intersubunit bridges in the 70S ribosome. The chain is Large ribosomal subunit protein uL14 from Campylobacter jejuni subsp. jejuni serotype O:6 (strain 81116 / NCTC 11828).